A 418-amino-acid polypeptide reads, in one-letter code: Methionine aminopeptidase 2 (418 aa).

The disordered stretch occupies residues 18–49 (VSEPAAVDDSEVTEDATVQDKKKKKKKKKKKG). A compositionally biased stretch (basic residues) spans 38-49 (KKKKKKKKKKKG). Histidine 172 contacts substrate. A divalent metal cation-binding residues include aspartate 192, aspartate 203, and histidine 272. Histidine 280 is a binding site for substrate. A divalent metal cation contacts are provided by glutamate 305 and glutamate 399.

It belongs to the peptidase M24A family. Methionine aminopeptidase eukaryotic type 2 subfamily. Co(2+) serves as cofactor. The cofactor is Zn(2+). Requires Mn(2+) as cofactor. It depends on Fe(2+) as a cofactor.

The protein resides in the cytoplasm. The enzyme catalyses Release of N-terminal amino acids, preferentially methionine, from peptides and arylamides.. Cotranslationally removes the N-terminal methionine from nascent proteins. The N-terminal methionine is often cleaved when the second residue in the primary sequence is small and uncharged (Met-Ala-, Cys, Gly, Pro, Ser, Thr, or Val). The sequence is that of Methionine aminopeptidase 2 from Kluyveromyces lactis (strain ATCC 8585 / CBS 2359 / DSM 70799 / NBRC 1267 / NRRL Y-1140 / WM37) (Yeast).